The primary structure comprises 81 residues: ATP synthase subunit c, chloroplastic (81 aa).

Helical transmembrane passes span 3 to 23 (PIIC…GAIG) and 57 to 77 (LAFM…IIFA).

Belongs to the ATPase C chain family. F-type ATPases have 2 components, F(1) - the catalytic core - and F(0) - the membrane proton channel. F(1) has five subunits: alpha(3), beta(3), gamma(1), delta(1), epsilon(1). F(0) has four main subunits: a(1), b(1), b'(1) and c(10-14). The alpha and beta chains form an alternating ring which encloses part of the gamma chain. F(1) is attached to F(0) by a central stalk formed by the gamma and epsilon chains, while a peripheral stalk is formed by the delta, b and b' chains.

Its subcellular location is the plastid. The protein localises to the chloroplast thylakoid membrane. Functionally, f(1)F(0) ATP synthase produces ATP from ADP in the presence of a proton or sodium gradient. F-type ATPases consist of two structural domains, F(1) containing the extramembraneous catalytic core and F(0) containing the membrane proton channel, linked together by a central stalk and a peripheral stalk. During catalysis, ATP synthesis in the catalytic domain of F(1) is coupled via a rotary mechanism of the central stalk subunits to proton translocation. In terms of biological role, key component of the F(0) channel; it plays a direct role in translocation across the membrane. A homomeric c-ring of between 10-14 subunits forms the central stalk rotor element with the F(1) delta and epsilon subunits. This is ATP synthase subunit c, chloroplastic from Euglena gracilis.